The primary structure comprises 103 residues: Large ribosomal subunit protein uL24 (103 aa).

It belongs to the universal ribosomal protein uL24 family. As to quaternary structure, part of the 50S ribosomal subunit.

Its function is as follows. One of two assembly initiator proteins, it binds directly to the 5'-end of the 23S rRNA, where it nucleates assembly of the 50S subunit. In terms of biological role, one of the proteins that surrounds the polypeptide exit tunnel on the outside of the subunit. In Histophilus somni (strain 129Pt) (Haemophilus somnus), this protein is Large ribosomal subunit protein uL24.